Reading from the N-terminus, the 76-residue chain is Omega-conotoxin-like TxMKLT1-0211 (76 aa).

The N-terminal stretch at 1–22 (MKLTCMMIVAVLFLTAWTFVTA) is a signal peptide. The propeptide occupies 23–52 (VPHSSNALENLYLKAHHEMNNPEDSELNKR). Intrachain disulfides connect Cys53–Cys67, Cys60–Cys71, and Cys66–Cys75.

The protein belongs to the conotoxin O1 superfamily. Expressed by the venom duct.

The protein resides in the secreted. In terms of biological role, omega-conotoxins act at presynaptic membranes, they bind and block voltage-gated calcium channels (Cav). The chain is Omega-conotoxin-like TxMKLT1-0211 from Conus textile (Cloth-of-gold cone).